We begin with the raw amino-acid sequence, 164 residues long: MKYVTPDLCDAYPQLVSVVEPMFQNFGAKSSFGGEIVTVKCFEDNSVVKQQVDQPGHGKVMVVDGGGSKRAALLGDMLAEKAAANGWEGIIIYGCIRDVDVIRQTDLGVQALGTHPMKTDKRGIGDLNADITFGGVTFKPGHYVYADNNGVIVSPEPLSMPQEQ.

Residues 75–78 and Arg97 each bind substrate; that span reads GDML. Asp98 is an a divalent metal cation binding site.

It belongs to the class II aldolase/RraA-like family. As to quaternary structure, homotrimer. A divalent metal cation is required as a cofactor.

It catalyses the reaction 4-hydroxy-4-methyl-2-oxoglutarate = 2 pyruvate. The enzyme catalyses oxaloacetate + H(+) = pyruvate + CO2. Functionally, catalyzes the aldol cleavage of 4-hydroxy-4-methyl-2-oxoglutarate (HMG) into 2 molecules of pyruvate. Also contains a secondary oxaloacetate (OAA) decarboxylase activity due to the common pyruvate enolate transition state formed following C-C bond cleavage in the retro-aldol and decarboxylation reactions. This is Putative 4-hydroxy-4-methyl-2-oxoglutarate aldolase from Hahella chejuensis (strain KCTC 2396).